The chain runs to 65 residues: Large ribosomal subunit protein bL35 (65 aa).

Residues 1–15 show a composition bias toward basic residues; sequence MPKMKTKKSASKRFT. 2 disordered regions span residues 1 to 26 and 38 to 65; these read MPKM…KRGQ and TKNK…MPYA. The span at 45-54 shows a compositional bias: basic and acidic residues; the sequence is RGTEGVHETN.

This sequence belongs to the bacterial ribosomal protein bL35 family.

The polypeptide is Large ribosomal subunit protein bL35 (Ralstonia pickettii (strain 12J)).